Reading from the N-terminus, the 294-residue chain is tRNA pseudouridine synthase B (294 aa).

Asp39 acts as the Nucleophile in catalysis.

The protein belongs to the pseudouridine synthase TruB family. Type 1 subfamily.

It catalyses the reaction uridine(55) in tRNA = pseudouridine(55) in tRNA. Responsible for synthesis of pseudouridine from uracil-55 in the psi GC loop of transfer RNAs. This is tRNA pseudouridine synthase B from Streptococcus pyogenes serotype M2 (strain MGAS10270).